The sequence spans 518 residues: Putative cysteine ligase BshC (518 aa).

Residues 404 to 474 (AAASAERLAA…RARQLTRLKR (71 aa)) adopt a coiled-coil conformation.

The protein belongs to the BshC family.

The sequence is that of Putative cysteine ligase BshC from Deinococcus geothermalis (strain DSM 11300 / CIP 105573 / AG-3a).